The primary structure comprises 797 residues: uncharacterized protein (797 aa).

The segment covering 394 to 403 (SDDRDDRDKD) has biased composition (basic and acidic residues). Residues 394 to 724 (SDDRDDRDKD…GTKDKEGNAN (331 aa)) form a disordered region. Residues 404–713 (EYELENEEYN…GEDEGEDEGD (310 aa)) show a composition bias toward acidic residues.

This sequence belongs to the herpesviridae BBRF2 family.

This is an uncharacterized protein from Saimiriine herpesvirus 2 (strain 11) (SaHV-2).